The chain runs to 109 residues: Large ribosomal subunit protein uL24 (109 aa).

This sequence belongs to the universal ribosomal protein uL24 family. Part of the 50S ribosomal subunit.

In terms of biological role, one of two assembly initiator proteins, it binds directly to the 5'-end of the 23S rRNA, where it nucleates assembly of the 50S subunit. Its function is as follows. One of the proteins that surrounds the polypeptide exit tunnel on the outside of the subunit. This is Large ribosomal subunit protein uL24 from Legionella pneumophila subsp. pneumophila (strain Philadelphia 1 / ATCC 33152 / DSM 7513).